The following is a 509-amino-acid chain: 2,3-bisphosphoglycerate-independent phosphoglycerate mutase (509 aa).

2 residues coordinate Mn(2+): aspartate 12 and serine 62. The active-site Phosphoserine intermediate is serine 62. Residues histidine 123, 153 to 154 (RD), arginine 185, arginine 191, 260 to 263 (RPDR), and lysine 333 each bind substrate. Positions 400, 404, 441, 442, and 460 each coordinate Mn(2+).

This sequence belongs to the BPG-independent phosphoglycerate mutase family. Monomer. Requires Mn(2+) as cofactor.

The enzyme catalyses (2R)-2-phosphoglycerate = (2R)-3-phosphoglycerate. Its pathway is carbohydrate degradation; glycolysis; pyruvate from D-glyceraldehyde 3-phosphate: step 3/5. Functionally, catalyzes the interconversion of 2-phosphoglycerate and 3-phosphoglycerate. In Clostridium kluyveri (strain ATCC 8527 / DSM 555 / NBRC 12016 / NCIMB 10680 / K1), this protein is 2,3-bisphosphoglycerate-independent phosphoglycerate mutase.